A 406-amino-acid chain; its full sequence is Peptidase T (406 aa).

His82 contributes to the Zn(2+) binding site. The active site involves Asp84. Asp142 contributes to the Zn(2+) binding site. Glu176 acts as the Proton acceptor in catalysis. Glu177, Asp199, and His381 together coordinate Zn(2+).

Belongs to the peptidase M20B family. Zn(2+) is required as a cofactor.

Its subcellular location is the cytoplasm. The catalysed reaction is Release of the N-terminal residue from a tripeptide.. Cleaves the N-terminal amino acid of tripeptides. The protein is Peptidase T of Streptococcus agalactiae serotype III (strain NEM316).